A 617-amino-acid polypeptide reads, in one-letter code: Dihydroxy-acid dehydratase (617 aa).

Residue D81 coordinates Mg(2+). C122 serves as a coordination point for [2Fe-2S] cluster. Mg(2+) contacts are provided by D123 and K124. K124 carries the N6-carboxylysine modification. C195 contributes to the [2Fe-2S] cluster binding site. Residue E492 coordinates Mg(2+). The active-site Proton acceptor is the S518.

The protein belongs to the IlvD/Edd family. As to quaternary structure, homodimer. Requires [2Fe-2S] cluster as cofactor. Mg(2+) serves as cofactor.

The enzyme catalyses (2R)-2,3-dihydroxy-3-methylbutanoate = 3-methyl-2-oxobutanoate + H2O. The catalysed reaction is (2R,3R)-2,3-dihydroxy-3-methylpentanoate = (S)-3-methyl-2-oxopentanoate + H2O. The protein operates within amino-acid biosynthesis; L-isoleucine biosynthesis; L-isoleucine from 2-oxobutanoate: step 3/4. It participates in amino-acid biosynthesis; L-valine biosynthesis; L-valine from pyruvate: step 3/4. Its function is as follows. Functions in the biosynthesis of branched-chain amino acids. Catalyzes the dehydration of (2R,3R)-2,3-dihydroxy-3-methylpentanoate (2,3-dihydroxy-3-methylvalerate) into 2-oxo-3-methylpentanoate (2-oxo-3-methylvalerate) and of (2R)-2,3-dihydroxy-3-methylbutanoate (2,3-dihydroxyisovalerate) into 2-oxo-3-methylbutanoate (2-oxoisovalerate), the penultimate precursor to L-isoleucine and L-valine, respectively. The chain is Dihydroxy-acid dehydratase from Azorhizobium caulinodans (strain ATCC 43989 / DSM 5975 / JCM 20966 / LMG 6465 / NBRC 14845 / NCIMB 13405 / ORS 571).